The sequence spans 365 residues: Decapping nuclease RAI1 (365 aa).

A divalent metal cation is bound at residue glutamate 165. The substrate site is built by cysteine 197 and glutamate 214. Residues aspartate 216, glutamate 234, and leucine 235 each coordinate a divalent metal cation. The substrate site is built by lysine 236 and glutamine 260.

The protein belongs to the DXO/Dom3Z family. In terms of assembly, interacts with rat1; the interaction is direct, stabilizes rat1 protein structure and stimulates its exoribonuclease activity. The interaction also stimulates rai1 pyrophosphohydrolase activity, probably by recruiting it to mRNA substrates. The cofactor is a divalent metal cation.

It localises to the nucleus. It carries out the reaction a 5'-end NAD(+)-phospho-ribonucleoside in mRNA + H2O = a 5'-end phospho-ribonucleoside in mRNA + NAD(+) + H(+). The catalysed reaction is a 5'-end (N(7)-methyl 5'-triphosphoguanosine)-ribonucleoside-ribonucleotide in mRNA + H2O = a (N(7)-methyl 5'-triphosphoguanosine)-nucleoside + a 5'-end phospho-ribonucleoside in mRNA + H(+). It catalyses the reaction a 5'-end triphospho-ribonucleoside in mRNA + H2O = a 5'-end phospho-ribonucleoside in mRNA + diphosphate + H(+). Functionally, decapping enzyme for NAD-capped RNAs: specifically hydrolyzes the nicotinamide adenine dinucleotide (NAD) cap from a subset of RNAs by removing the entire NAD moiety from the 5'-end of an NAD-capped RNA. The NAD-cap is present at the 5'-end of some RNAs and snoRNAs. In contrast to the canonical 5'-end N7 methylguanosine (m7G) cap, the NAD cap promotes mRNA decay. Also acts as a non-canonical decapping enzyme that removes the entire cap structure of m7G capped or incompletely capped RNAs. Has decapping activity toward incomplete 5'-end m7G cap mRNAs such as unmethylated 5'-end-capped RNA (cap0), while it has no activity toward 2'-O-ribose methylated m7G cap (cap1). Also possesses RNA 5'-pyrophosphohydrolase activity by hydrolyzing the 5'-end triphosphate to release pyrophosphates. Stimulates exoribonuclease activity of Rat1, allowing it to degrade RNAs with stable secondary structure more effectively. In Aspergillus fumigatus (strain ATCC MYA-4609 / CBS 101355 / FGSC A1100 / Af293) (Neosartorya fumigata), this protein is Decapping nuclease RAI1 (rai1).